The primary structure comprises 822 residues: Fibroblast growth factor receptor 1 (822 aa).

The N-terminal stretch at 1 to 21 (MWSWKCLLFWAVLVTATLCTA) is a signal peptide. Residues 22 to 376 (RPSPTLPEQA…AVMTSPLYLE (355 aa)) are Extracellular-facing. Residues 25–119 (PTLPEQAQPW…DTTYFSVNVS (95 aa)) enclose the Ig-like C2-type 1 domain. Cysteine 55 and cysteine 101 are disulfide-bonded. N-linked (GlcNAc...) asparagine glycosylation is found at asparagine 77 and asparagine 117. The segment at 120 to 154 (DALPSSEDDDDDDDSSSEEKETDNTKPNRMPVAPY) is disordered. Positions 125 to 135 (SEDDDDDDDSS) are enriched in acidic residues. The segment covering 136 to 145 (SEEKETDNTK) has biased composition (basic and acidic residues). Ig-like C2-type domains follow at residues 158 to 246 (PEKM…YQLD) and 255 to 357 (PILQ…AWLT). The segment at 160-177 (KMEKKLHAVPAAKTVKFK) is heparin-binding. An intrachain disulfide couples cysteine 178 to cysteine 230. Asparagine 227, asparagine 240, asparagine 264, asparagine 296, asparagine 317, and asparagine 330 each carry an N-linked (GlcNAc...) asparagine glycan. A disulfide bond links cysteine 277 and cysteine 341. The helical transmembrane segment at 377–397 (IIIYCTGAFLISCMVGSVIVY) threads the bilayer. Residues 398-822 (KMKSGTKKSD…QLANGGLKRR (425 aa)) are Cytoplasmic-facing. Tyrosine 463 is modified (phosphotyrosine; by autocatalysis). One can recognise a Protein kinase domain in the interval 478–767 (LVLGKPLGEG…VALTSNQEYL (290 aa)). ATP is bound by residues 484 to 490 (LGEGCFG), lysine 514, 562 to 564 (EYA), and asparagine 568. 2 positions are modified to phosphotyrosine; by autocatalysis: tyrosine 583 and tyrosine 585. Aspartate 623 acts as the Proton acceptor in catalysis. Residues arginine 627 and aspartate 641 each coordinate ATP. Phosphotyrosine; by autocatalysis occurs at positions 653, 654, 730, and 766. Over residues 778–792 (PSFPDTRSSTCSSGE) the composition is skewed to polar residues. Residues 778-822 (PSFPDTRSSTCSSGEDSVFSHEPLPEEPCLPRHPAQLANGGLKRR) form a disordered region.

This sequence belongs to the protein kinase superfamily. Tyr protein kinase family. Fibroblast growth factor receptor subfamily. In terms of assembly, monomer. Homodimer after ligand binding. Interacts predominantly with FGF1 and FGF2, but can also interact with FGF3, FGF4, FGF5, FGF6, FGF8, FGF10, FGF19, FGF21, FGF22 and FGF23 (in vitro). Ligand specificity is determined by tissue-specific expression of isoforms, and differences in the third Ig-like domain are crucial for ligand specificity. Affinity for fibroblast growth factors (FGFs) is increased by heparan sulfate glycosaminoglycans that function as coreceptors. Likewise, KLB increases the affinity for FGF19, FGF21 and FGF23. Interacts (phosphorylated on Tyr-766) with PLCG1 (via SH2 domains). Interacts with FRS2. Interacts with RPS6KA1. Interacts (via C-terminus) with NEDD4 (via WW3 domain). Interacts with KL. Interacts with SHB (via SH2 domain). Interacts with GRB10. Interacts with ANOS1; this interaction does not interfere with FGF2-binding to FGFR1, but prevents binding of heparin-bound FGF2. Interacts with SOX2 and SOX3. Interacts with FLRT1, FLRT2 and FLRT3. Found in a ternary complex with FGF1 and ITGAV:ITGB3. Autophosphorylated. Binding of FGF family members together with heparan sulfate proteoglycan or heparin promotes receptor dimerization and autophosphorylation on tyrosine residues. Autophosphorylation occurs in trans between the two FGFR molecules present in the dimer and proceeds in a highly ordered manner. Initial autophosphorylation at Tyr-653 increases the kinase activity by a factor of 50 to 100. After this, Tyr-583 becomes phosphorylated, followed by phosphorylation of Tyr-463, Tyr-766, Tyr-583 and Tyr-585. In a third stage, Tyr-654 is autophosphorylated, resulting in a further tenfold increase of kinase activity. Phosphotyrosine residues provide docking sites for interacting proteins and so are crucial for FGFR1 function and its regulation. Post-translationally, ubiquitinated. FGFR1 is rapidly ubiquitinated by NEDD4 after autophosphorylation, leading to internalization and lysosomal degradation. CBL is recruited to activated FGFR1 via FRS2 and GRB2, and mediates ubiquitination and subsequent degradation of FGFR1. In terms of processing, N-glycosylated in the endoplasmic reticulum. The N-glycan chains undergo further maturation to an Endo H-resistant form in the Golgi apparatus. In terms of tissue distribution, detected in astrocytoma, neuroblastoma and adrenal cortex cell lines. Some isoforms are detected in foreskin fibroblast cell lines, however isoform 17, isoform 18 and isoform 19 are not detected in these cells.

It is found in the cell membrane. Its subcellular location is the nucleus. The protein resides in the cytoplasm. It localises to the cytosol. The protein localises to the cytoplasmic vesicle. It catalyses the reaction L-tyrosyl-[protein] + ATP = O-phospho-L-tyrosyl-[protein] + ADP + H(+). With respect to regulation, present in an inactive conformation in the absence of bound ligand. Ligand binding leads to dimerization and activation by sequential autophosphorylation on tyrosine residues. Inhibited by ARQ 069; this compound maintains the kinase in an inactive conformation and inhibits autophosphorylation. Inhibited by PD173074. Its function is as follows. Tyrosine-protein kinase that acts as a cell-surface receptor for fibroblast growth factors and plays an essential role in the regulation of embryonic development, cell proliferation, differentiation and migration. Required for normal mesoderm patterning and correct axial organization during embryonic development, normal skeletogenesis and normal development of the gonadotropin-releasing hormone (GnRH) neuronal system. Phosphorylates PLCG1, FRS2, GAB1 and SHB. Ligand binding leads to the activation of several signaling cascades. Activation of PLCG1 leads to the production of the cellular signaling molecules diacylglycerol and inositol 1,4,5-trisphosphate. Phosphorylation of FRS2 triggers recruitment of GRB2, GAB1, PIK3R1 and SOS1, and mediates activation of RAS, MAPK1/ERK2, MAPK3/ERK1 and the MAP kinase signaling pathway, as well as of the AKT1 signaling pathway. Promotes phosphorylation of SHC1, STAT1 and PTPN11/SHP2. In the nucleus, enhances RPS6KA1 and CREB1 activity and contributes to the regulation of transcription. FGFR1 signaling is down-regulated by IL17RD/SEF, and by FGFR1 ubiquitination, internalization and degradation. This chain is Fibroblast growth factor receptor 1 (FGFR1), found in Homo sapiens (Human).